We begin with the raw amino-acid sequence, 440 residues long: Histidinol dehydrogenase (440 aa).

NAD(+)-binding residues include tyrosine 136, glutamine 197, and asparagine 220. Positions 243, 265, and 268 each coordinate substrate. Zn(2+)-binding residues include glutamine 265 and histidine 268. Active-site proton acceptor residues include glutamate 333 and histidine 334. Residues histidine 334, aspartate 367, glutamate 421, and histidine 426 each contribute to the substrate site. Aspartate 367 contacts Zn(2+). Histidine 426 contributes to the Zn(2+) binding site.

It belongs to the histidinol dehydrogenase family. Requires Zn(2+) as cofactor.

The enzyme catalyses L-histidinol + 2 NAD(+) + H2O = L-histidine + 2 NADH + 3 H(+). It functions in the pathway amino-acid biosynthesis; L-histidine biosynthesis; L-histidine from 5-phospho-alpha-D-ribose 1-diphosphate: step 9/9. Functionally, catalyzes the sequential NAD-dependent oxidations of L-histidinol to L-histidinaldehyde and then to L-histidine. The chain is Histidinol dehydrogenase from Pseudomonas aeruginosa (strain ATCC 15692 / DSM 22644 / CIP 104116 / JCM 14847 / LMG 12228 / 1C / PRS 101 / PAO1).